The primary structure comprises 81 residues: MANIKSQEKRVLTNEKSRLANKAFKSEIKTAIKKALNAKSNDDANKAELVNHAVSLVDKGLKKGIFKDNKAAREKSRLMSA.

This sequence belongs to the bacterial ribosomal protein bS20 family.

In terms of biological role, binds directly to 16S ribosomal RNA. This is Small ribosomal subunit protein bS20 from Mycoplasma mycoides subsp. mycoides SC (strain CCUG 32753 / NCTC 10114 / PG1).